The primary structure comprises 205 residues: Nucleoside triphosphate pyrophosphatase (205 aa).

The active-site Proton acceptor is Asp-76.

It belongs to the Maf family. It depends on a divalent metal cation as a cofactor.

It is found in the cytoplasm. It carries out the reaction a ribonucleoside 5'-triphosphate + H2O = a ribonucleoside 5'-phosphate + diphosphate + H(+). It catalyses the reaction a 2'-deoxyribonucleoside 5'-triphosphate + H2O = a 2'-deoxyribonucleoside 5'-phosphate + diphosphate + H(+). Functionally, nucleoside triphosphate pyrophosphatase. May have a dual role in cell division arrest and in preventing the incorporation of modified nucleotides into cellular nucleic acids. The sequence is that of Nucleoside triphosphate pyrophosphatase from Orientia tsutsugamushi (strain Boryong) (Rickettsia tsutsugamushi).